A 177-amino-acid polypeptide reads, in one-letter code: Protein GrpE (177 aa).

The segment at 1-26 is disordered; sequence MSEEIKKDDLQEEVEATETEETVEEV. Residues 10–26 show a composition bias toward acidic residues; it reads LQEEVEATETEETVEEV.

This sequence belongs to the GrpE family. As to quaternary structure, homodimer.

The protein localises to the cytoplasm. In terms of biological role, participates actively in the response to hyperosmotic and heat shock by preventing the aggregation of stress-denatured proteins, in association with DnaK and GrpE. It is the nucleotide exchange factor for DnaK and may function as a thermosensor. Unfolded proteins bind initially to DnaJ; upon interaction with the DnaJ-bound protein, DnaK hydrolyzes its bound ATP, resulting in the formation of a stable complex. GrpE releases ADP from DnaK; ATP binding to DnaK triggers the release of the substrate protein, thus completing the reaction cycle. Several rounds of ATP-dependent interactions between DnaJ, DnaK and GrpE are required for fully efficient folding. The chain is Protein GrpE from Streptococcus agalactiae serotype Ia (strain ATCC 27591 / A909 / CDC SS700).